The following is a 180-amino-acid chain: uncharacterized protein (180 aa).

This is an uncharacterized protein from Rickettsia prowazekii (strain Madrid E).